Consider the following 335-residue polypeptide: Nucleoid-associated protein Ent638_2782 (335 aa).

The protein belongs to the YejK family.

It is found in the cytoplasm. Its subcellular location is the nucleoid. The polypeptide is Nucleoid-associated protein Ent638_2782 (Enterobacter sp. (strain 638)).